A 504-amino-acid chain; its full sequence is Cytochrome P450 6a9 (504 aa).

C449 is a binding site for heme.

The protein belongs to the cytochrome P450 family. It depends on heme as a cofactor.

The protein localises to the endoplasmic reticulum membrane. It localises to the microsome membrane. In terms of biological role, involved in the metabolism of insect hormones and in the breakdown of synthetic insecticides. The chain is Cytochrome P450 6a9 (Cyp6a9) from Drosophila melanogaster (Fruit fly).